The following is a 609-amino-acid chain: MEEELKQQFDEMGVEPADAVLGRCAELAITYNIHDATEFVEQWMAFSLSHLQGEDPAIENLGDFERKVLQLRKDKAGYKATGQKAKSYGSPSVQDTSSLATYGVMEDDPMLDDYVSESAVDSSALHTPKAKKQSDRTANLKGAALFSPASYTPQSAKRKAGLETPSNSVAGKPGDIVDTFGHPKLLAGSSWQSQMEHTVPVTQKLLHNDAPLTIANLGYMNDLLTDRCHNLRVRFNQTGPALVDKKLGQAGAAECIWYPQDRQVLQSAGGLHAVGMIHSEDDGPLDAHSAFMAVLDDDVEDEMDPTLTLNFSRVKSASIFPGQVVLAKGFIPRGKTFMVEEIHTERKLTPATPLQIDRELQFVVASGPFTDSTDLFYEPLHDLLKYLKDHRPDVLVLTGPFLDADHKMVGELAETFDTFFEKMIGGIMESIGSHTAVLVVTSQKDAMALSVYPTPPPALRRTYPNLYMLPDPSLVDLDGFTLGVTSTDVVDHLLSHEFAVNAGERMHRAINHLFHQGSFYPLYPPADEDMAYDSQLALKYAQLKQLPNVLILPSDQRHFIRLVNDCLVINPGRVADKKGGTFARFLVAPSVPGKAANMFNSVACQVQRI.

Ser155 carries the post-translational modification Phosphoserine. Thr164 bears the Phosphothreonine mark. Residues Ser166 and Ser168 each carry the phosphoserine modification.

The protein belongs to the DNA polymerase alpha subunit B family. As to quaternary structure, component of the alpha DNA polymerase complex (also known as the alpha DNA polymerase-primase complex) consisting of four subunits: the catalytic subunit PolA1, the regulatory subunit PolA2, and the primase complex subunits Prim1 and Prim2 respectively. PolA1 associates with the DNA primase complex before association with PolA2. Phosphorylated in embryos until cycle 13. As to expression, expressed in embryos (at protein level).

Its subcellular location is the nucleus. Accessory subunit of the DNA polymerase alpha complex (also known as the alpha DNA polymerase-primase complex) which plays an essential role in the initiation of DNA synthesis. During the S phase of the cell cycle, the DNA polymerase alpha complex (composed of a catalytic subunit PolA1, an accessory subunit PolA2 and two primase subunits, the catalytic subunit Prim1 and the regulatory subunit Prim2) is recruited to DNA at the replicative forks. The primase subunit of the polymerase alpha complex initiates DNA synthesis by oligomerising short RNA primers on both leading and lagging strands. These primers are initially extended by the polymerase alpha catalytic subunit and subsequently transferred to polymerase delta and polymerase epsilon for processive synthesis on the lagging and leading strand, respectively. This chain is DNA polymerase alpha subunit B, found in Drosophila melanogaster (Fruit fly).